Reading from the N-terminus, the 440-residue chain is Chromosome partition protein MukF (440 aa).

Residues 208–236 (LSETSGTLRELQDTLEAAGDKLQANLLRI) form a leucine-zipper region.

It belongs to the MukF family. Interacts, and probably forms a ternary complex, with MukE and MukB via its C-terminal region. The complex formation is stimulated by calcium or magnesium. It is required for an interaction between MukE and MukB.

The protein localises to the cytoplasm. The protein resides in the nucleoid. Its function is as follows. Involved in chromosome condensation, segregation and cell cycle progression. May participate in facilitating chromosome segregation by condensation DNA from both sides of a centrally located replisome during cell division. Not required for mini-F plasmid partitioning. Probably acts via its interaction with MukB and MukE. Overexpression results in anucleate cells. It has a calcium binding activity. This Serratia proteamaculans (strain 568) protein is Chromosome partition protein MukF.